A 648-amino-acid polypeptide reads, in one-letter code: Solute carrier family 23 member 2 (648 aa).

The segment at M1–G21 is disordered. The Cytoplasmic portion of the chain corresponds to A9–Y110. Phosphoserine is present on S70. A Phosphothreonine modification is found at T75. S78 carries the phosphoserine modification. The residue at position 79 (T79) is a Phosphothreonine. Phosphoserine is present on S81. A helical membrane pass occupies residues L111–G131. The Extracellular segment spans residues D132–Q139. The helical transmembrane segment at L140–C160 threads the bilayer. Position 161 (R161) is a topological domain, cytoplasmic. Residues L162–L182 traverse the membrane as a helical segment. Residues D183–A216 lie on the Extracellular side of the membrane. N-linked (GlcNAc...) asparagine glycans are attached at residues N188 and N196. Residues I217–L237 form a helical membrane-spanning segment. The Cytoplasmic portion of the chain corresponds to R238–A264. A helical transmembrane segment spans residues G265–S282. At Q283–R286 the chain is on the extracellular side. Positions N287–G300 form an intramembrane region, helical. At W301–Q307 the chain is on the extracellular side. The helical transmembrane segment at L308 to F328 threads the bilayer. The Cytoplasmic segment spans residues T329 to G369. Residues M370–I390 traverse the membrane as a helical segment. Over E391–R415 the chain is Extracellular. The helical transmembrane segment at G416–S436 threads the bilayer. The Cytoplasmic portion of the chain corresponds to T437–Y459. The chain crosses the membrane as a helical span at residues G460–L480. The Extracellular portion of the chain corresponds to P481–P483. The helical transmembrane segment at V484–L504 threads the bilayer. Residues Q505 to N514 are Cytoplasmic-facing. A helical membrane pass occupies residues L515–N535. Residues P536–D545 lie on the Extracellular side of the membrane. A helical membrane pass occupies residues Q546–L566. Topologically, residues D567–V648 are cytoplasmic. Phosphothreonine is present on T647.

The protein belongs to the nucleobase:cation symporter-2 (NCS2) (TC 2.A.40) family. In terms of assembly, interacts with CLSTN3. Post-translationally, phosphorylated. In terms of tissue distribution, expressed in metabolically active and specialized tissues, including high expression in brain and adrenals. Detected in a wide range of tissues. Expression in kidney is almost undetectable.

It localises to the cell membrane. It carries out the reaction L-ascorbate(out) + 2 Na(+)(out) = L-ascorbate(in) + 2 Na(+)(in). Functionally, sodium/ascorbate cotransporter. Mediates electrogenic uptake of vitamin C, with a stoichiometry of 2 Na(+) for each ascorbate. The sequence is that of Solute carrier family 23 member 2 (Slc23a2) from Mus musculus (Mouse).